A 214-amino-acid chain; its full sequence is A-type ATP synthase subunit D (214 aa).

The protein belongs to the V-ATPase D subunit family. Has multiple subunits with at least A(3), B(3), C, D, E, F, H, I and proteolipid K(x).

It localises to the cell membrane. Component of the A-type ATP synthase that produces ATP from ADP in the presence of a proton gradient across the membrane. In Thermococcus kodakarensis (strain ATCC BAA-918 / JCM 12380 / KOD1) (Pyrococcus kodakaraensis (strain KOD1)), this protein is A-type ATP synthase subunit D.